We begin with the raw amino-acid sequence, 158 residues long: S-ribosylhomocysteine lyase (158 aa).

Fe cation-binding residues include histidine 54, histidine 58, and cysteine 124.

The protein belongs to the LuxS family. As to quaternary structure, homodimer. Requires Fe cation as cofactor.

It carries out the reaction S-(5-deoxy-D-ribos-5-yl)-L-homocysteine = (S)-4,5-dihydroxypentane-2,3-dione + L-homocysteine. Its function is as follows. Involved in the synthesis of autoinducer 2 (AI-2) which is secreted by bacteria and is used to communicate both the cell density and the metabolic potential of the environment. The regulation of gene expression in response to changes in cell density is called quorum sensing. Catalyzes the transformation of S-ribosylhomocysteine (RHC) to homocysteine (HC) and 4,5-dihydroxy-2,3-pentadione (DPD). This is S-ribosylhomocysteine lyase from Limosilactobacillus reuteri (strain DSM 20016) (Lactobacillus reuteri).